The chain runs to 644 residues: MATGIASGSGQLHLRKPVYWRSSYGKAHCHSNAILNGMQNQIPWSYWVSKFLRVHRSNYSQCQVKTNWKSHTGTINSCQRDGSTRYFDFAVIGSGIAGLRYALEVAKHGTVAVITKAEPHESNTNYAQGGVSAVFCPMDSVESHMQDTIVAGAYLCDEETVRVVCTEGPERIRELIAMGASFDHGEDGNLHLAREGGHSHRRIVHAADMTGREIERALLEAVFKHPNIHVFQHHFAIDFLTTQDGSDIICHGVDAINTETQEVIRFISKVTLLASGGAGHIYPSTTNPPVATGDGMAMAHRAQAVISNMEFVQFHPTALADEGLPNRPSARENAFLITEAVRGDGGILYNLDMERFMPMYDKRAELAPRDVVARSIDDQLKKRGEKYVLLDISHKPREKVLSHFPNIAAECLRHGLDITQQPIPVVPAAHYMCGGVRAGLEGETNVQGLYVAGEVACTGLHGANRLASNSLLEALVFARRAVQPSIDHVNVSRIDHCASSWWPRPVAPVVIGDTVLNKVIRRTREVRKELQSIMWEYVGIVRSTSRLTAAEKRINELELEWETYLFQHGWEPTMVGLEACEMRNLFCCANLVVSSALSRHESRGLHYTIDFPHVVESKRLPTIIFPSQRNSSWSSRQLHRQQIC.

Residues 94–97, Lys-116, 123–130, and Asp-294 each bind FAD; these read SGIA and NTNYAQGG. Catalysis depends on Arg-369, which acts as the Proton donor/acceptor. FAD contacts are provided by residues Glu-454 and 470 to 471; that span reads SL.

This sequence belongs to the FAD-dependent oxidoreductase 2 family. NadB subfamily. Requires FAD as cofactor.

The protein localises to the plastid. It is found in the chloroplast. It catalyses the reaction L-aspartate + O2 = iminosuccinate + H2O2. It participates in alkaloid biosynthesis; nicotine biosynthesis. It functions in the pathway cofactor biosynthesis; NAD(+) biosynthesis; iminoaspartate from L-aspartate (oxidase route): step 1/1. Functionally, involved in the biosynthesis of pyridine alkaloid natural products, leading mainly to the production of anabasine, anatabine, nicotine and nornicotine, effective deterrents against herbivores with antiparasitic and pesticide properties (neurotoxins); nornicotine serves as the precursor in the synthesis of the carcinogen compound N'-nitrosonornicotine (NNN). Catalyzes the oxidation of L-aspartate to iminoaspartate. The protein is L-aspartate oxidase 2-a, chloroplastic of Nicotiana tabacum (Common tobacco).